The sequence spans 559 residues: 2-isopropylmalate synthase (559 aa).

A Pyruvate carboxyltransferase domain is found at 33–307 (PIWCSSDLRD…DPQLDFSDID (275 aa)). The Mg(2+) site is built by Asp-42, His-246, His-248, and Asn-282. The interval 439 to 559 (ANTPYALVSH…SLSQQEAKAA (121 aa)) is regulatory domain.

The protein belongs to the alpha-IPM synthase/homocitrate synthase family. LeuA type 2 subfamily. In terms of assembly, homodimer. It depends on Mg(2+) as a cofactor.

It localises to the cytoplasm. The catalysed reaction is 3-methyl-2-oxobutanoate + acetyl-CoA + H2O = (2S)-2-isopropylmalate + CoA + H(+). Its pathway is amino-acid biosynthesis; L-leucine biosynthesis; L-leucine from 3-methyl-2-oxobutanoate: step 1/4. Its function is as follows. Catalyzes the condensation of the acetyl group of acetyl-CoA with 3-methyl-2-oxobutanoate (2-ketoisovalerate) to form 3-carboxy-3-hydroxy-4-methylpentanoate (2-isopropylmalate). The polypeptide is 2-isopropylmalate synthase (Pseudomonas fluorescens (strain SBW25)).